A 765-amino-acid chain; its full sequence is Putative chloride channel-like protein CLC-g (765 aa).

12 consecutive transmembrane segments (helical) span residues 67-87 (VFMK…IGFA), 116-136 (FVVF…ITAF), 167-187 (LIIK…IGKA), 190-210 (MVHT…KRYR), 232-252 (GAAA…LFAL), 262-282 (ALLW…RALI), 315-335 (VLPV…YNFL), 355-375 (ILLA…LPFL), 438-458 (FSVL…YGIV), 462-482 (GLFV…GMLL), 494-514 (AVLG…STCV), and 515-535 (ILLE…VLLI). The CBS 1 domain occupies 568 to 640 (MRQLLVGDVV…LLKKRVFMPS (73 aa)). Ser-646 bears the Phosphoserine mark. In terms of domain architecture, CBS 2 spans 687–748 (FSNASPYTVV…PEHILGLHPS (62 aa)). Residues 715-735 (HLLVIPKTSNRPPVVGILTRH) form a helical membrane-spanning segment.

This sequence belongs to the chloride channel (TC 2.A.49) family. Homodimer. Interacts with PP2A5.

Its subcellular location is the membrane. Functionally, putative voltage-gated chloride channel. In Arabidopsis thaliana (Mouse-ear cress), this protein is Putative chloride channel-like protein CLC-g (CLC-G).